A 288-amino-acid chain; its full sequence is Phosphatidylglycerol--prolipoprotein diacylglyceryl transferase (288 aa).

A run of 4 helical transmembrane segments spans residues 18 to 38 (WSLR…LACL), 68 to 88 (FFIY…VIFY), 107 to 127 (GLSS…FSWI), and 135 to 155 (LTFL…AFFI). Arg156 is an a 1,2-diacyl-sn-glycero-3-phospho-(1'-sn-glycerol) binding site. Helical transmembrane passes span 193 to 213 (VQLY…FLSY), 222 to 242 (GYVT…AEYV), and 256 to 276 (LTIG…LLII).

This sequence belongs to the Lgt family.

It localises to the cell inner membrane. The enzyme catalyses L-cysteinyl-[prolipoprotein] + a 1,2-diacyl-sn-glycero-3-phospho-(1'-sn-glycerol) = an S-1,2-diacyl-sn-glyceryl-L-cysteinyl-[prolipoprotein] + sn-glycerol 1-phosphate + H(+). It functions in the pathway protein modification; lipoprotein biosynthesis (diacylglyceryl transfer). Functionally, catalyzes the transfer of the diacylglyceryl group from phosphatidylglycerol to the sulfhydryl group of the N-terminal cysteine of a prolipoprotein, the first step in the formation of mature lipoproteins. The chain is Phosphatidylglycerol--prolipoprotein diacylglyceryl transferase from Chlamydia pneumoniae (Chlamydophila pneumoniae).